The primary structure comprises 382 residues: UDP-4-amino-4-deoxy-L-arabinose--oxoglutarate aminotransferase (382 aa).

Position 183 is an N6-(pyridoxal phosphate)lysine (lysine 183).

Belongs to the DegT/DnrJ/EryC1 family. ArnB subfamily. In terms of assembly, homodimer. It depends on pyridoxal 5'-phosphate as a cofactor.

It catalyses the reaction UDP-4-amino-4-deoxy-beta-L-arabinose + 2-oxoglutarate = UDP-beta-L-threo-pentopyranos-4-ulose + L-glutamate. Its pathway is nucleotide-sugar biosynthesis; UDP-4-deoxy-4-formamido-beta-L-arabinose biosynthesis; UDP-4-deoxy-4-formamido-beta-L-arabinose from UDP-alpha-D-glucuronate: step 2/3. The protein operates within bacterial outer membrane biogenesis; lipopolysaccharide biosynthesis. Its function is as follows. Catalyzes the conversion of UDP-4-keto-arabinose (UDP-Ara4O) to UDP-4-amino-4-deoxy-L-arabinose (UDP-L-Ara4N). The modified arabinose is attached to lipid A and is required for resistance to polymyxin and cationic antimicrobial peptides. In Pseudomonas fluorescens (strain Pf0-1), this protein is UDP-4-amino-4-deoxy-L-arabinose--oxoglutarate aminotransferase.